The primary structure comprises 305 residues: Dermonecrotic toxin LiSicTox-alphaIA2aiii (305 aa).

The signal sequence occupies residues 1 to 17; the sequence is LPYIALILVCWSVLSQA. A propeptide spanning residues 18-25 is cleaved from the precursor; sequence AQTDVEER. His-37 is a catalytic residue. The Mg(2+) site is built by Glu-57 and Asp-59. The Nucleophile role is filled by His-73. Disulfide bonds link Cys-77-Cys-83 and Cys-79-Cys-222. Asp-117 contributes to the Mg(2+) binding site. Asn-282 carries N-linked (GlcNAc...) asparagine glycosylation.

This sequence belongs to the arthropod phospholipase D family. Class II subfamily. It depends on Mg(2+) as a cofactor. Expressed by the venom gland.

The protein localises to the secreted. It carries out the reaction an N-(acyl)-sphingosylphosphocholine = an N-(acyl)-sphingosyl-1,3-cyclic phosphate + choline. The catalysed reaction is an N-(acyl)-sphingosylphosphoethanolamine = an N-(acyl)-sphingosyl-1,3-cyclic phosphate + ethanolamine. It catalyses the reaction a 1-acyl-sn-glycero-3-phosphocholine = a 1-acyl-sn-glycero-2,3-cyclic phosphate + choline. The enzyme catalyses a 1-acyl-sn-glycero-3-phosphoethanolamine = a 1-acyl-sn-glycero-2,3-cyclic phosphate + ethanolamine. Dermonecrotic toxins cleave the phosphodiester linkage between the phosphate and headgroup of certain phospholipids (sphingolipid and lysolipid substrates), forming an alcohol (often choline) and a cyclic phosphate. This toxin acts on sphingomyelin (SM). It may also act on ceramide phosphoethanolamine (CPE), lysophosphatidylcholine (LPC) and lysophosphatidylethanolamine (LPE), but not on lysophosphatidylserine (LPS), and lysophosphatidylglycerol (LPG). It acts by transphosphatidylation, releasing exclusively cyclic phosphate products as second products. Induces dermonecrosis, hemolysis, increased vascular permeability, edema, inflammatory response, and platelet aggregation. The sequence is that of Dermonecrotic toxin LiSicTox-alphaIA2aiii from Loxosceles intermedia (Brown spider).